We begin with the raw amino-acid sequence, 197 residues long: Large ribosomal subunit protein eL15 (197 aa).

A disordered region spans residues 175 to 197; it reads LRTGRKGSSKSRPSIRANGRLRR.

It belongs to the eukaryotic ribosomal protein eL15 family.

This is Large ribosomal subunit protein eL15 (rpl15e) from Thermoplasma volcanium (strain ATCC 51530 / DSM 4299 / JCM 9571 / NBRC 15438 / GSS1).